We begin with the raw amino-acid sequence, 211 residues long: Large ribosomal subunit protein uL3 (211 aa).

Q151 carries the N5-methylglutamine modification.

The protein belongs to the universal ribosomal protein uL3 family. In terms of assembly, part of the 50S ribosomal subunit. Forms a cluster with proteins L14 and L19. Methylated by PrmB.

One of the primary rRNA binding proteins, it binds directly near the 3'-end of the 23S rRNA, where it nucleates assembly of the 50S subunit. The sequence is that of Large ribosomal subunit protein uL3 from Francisella tularensis subsp. tularensis (strain FSC 198).